Consider the following 106-residue polypeptide: Nucleoid-associated protein RPD_0086 (106 aa).

Belongs to the YbaB/EbfC family. In terms of assembly, homodimer.

The protein resides in the cytoplasm. Its subcellular location is the nucleoid. Binds to DNA and alters its conformation. May be involved in regulation of gene expression, nucleoid organization and DNA protection. In Rhodopseudomonas palustris (strain BisB5), this protein is Nucleoid-associated protein RPD_0086.